Consider the following 346-residue polypeptide: Tripartite motif-containing protein 44 (346 aa).

Residues 68–167 (TPPASGGDDA…ETEAESEFDP (100 aa)) form a disordered region. Over residues 89–167 (EGEVESEVGE…ETEAESEFDP (79 aa)) the composition is skewed to acidic residues. The B box-type zinc-finger motif lies at 176-217 (VAKRKCPDHGLDLSTYCQEDRQLICVLCPVIGAHRGHQLSTL). Cys181, His184, Cys203, and His209 together coordinate Zn(2+). A coiled-coil region spans residues 292 to 327 (AHVTEILADIQSHMDRLMTQMAQAKEQLDTSNESAE). Residues 313–346 (AQAKEQLDTSNESAEPKAEGDEEGPSGASEEEDT) are disordered. A compositionally biased stretch (acidic residues) spans 332–346 (GDEEGPSGASEEEDT). A phosphoserine mark is found at Ser338 and Ser341.

As to quaternary structure, interacts (via coiled coil) with TRIM17 (via coiled coil). As to expression, expressed mainly in brain with high level in cerebral hemispheres and cerebellum. Lower expression in kidney, lung and spleen. In brain is detected in the hippocampus, thalamic and pretectal nuclei, substantia nigra, the dorsal part of the medulla, the cerebellum, in the olfactory nucleus, other cortical areas apart from hippocampus and the striatum. Indeed expression is confined in neuronal somata namely in the CA3 region and dentate gyrus of the hippocampus, caudate-putamen, parabranchial nucleus, olfactory nucleus, cortex, deep cerebellar nuclei and thalamus. Also highly expressed in the spleen. thymus and testis.

Its function is as follows. May play a role in the process of differentiation and maturation of neuronal cells. May regulate the activity of TRIM17. Is a negative regulator of PAX6 expression. The protein is Tripartite motif-containing protein 44 (Trim44) of Mus musculus (Mouse).